The primary structure comprises 210 residues: MTTIETLKWDGKKSGEVKLDLTVAKETSSADLIHRAVLRQLANKRQGTASTLTRSEVRGGGRKPYKQKGTGRARQGSIRTPLRPGGGIIFGPKPRSYNLDMNRKERRLALRTALMSRISDVKAVEDFGSTLKQPKTSDIINGLTRLGIQKTEKVLVILDSPSEVIKKSINNIEKVKLIAADQLNVFDILNANKLVIGQSAINKIKEVYAS.

A disordered region spans residues Q46–I89. Residues G60–G71 are compositionally biased toward basic residues.

The protein belongs to the universal ribosomal protein uL4 family. Part of the 50S ribosomal subunit.

One of the primary rRNA binding proteins, this protein initially binds near the 5'-end of the 23S rRNA. It is important during the early stages of 50S assembly. It makes multiple contacts with different domains of the 23S rRNA in the assembled 50S subunit and ribosome. Functionally, forms part of the polypeptide exit tunnel. This Prochlorococcus marinus (strain MIT 9312) protein is Large ribosomal subunit protein uL4.